The following is a 72-amino-acid chain: Protein RALF-like 20 (72 aa).

A signal peptide spans 1-27 (MVLSKKTIMQSFALMIILSIVMSTTEA). 2 cysteine pairs are disulfide-bonded: cysteine 43–cysteine 51 and cysteine 63–cysteine 69.

This sequence belongs to the plant rapid alkalinization factor (RALF) family.

The protein localises to the secreted. Its function is as follows. Cell signaling peptide that may regulate plant stress, growth, and development. Mediates a rapid alkalinization of extracellular space by mediating a transient increase in the cytoplasmic Ca(2+) concentration leading to a calcium-dependent signaling events through a cell surface receptor and a concomitant activation of some intracellular mitogen-activated protein kinases. The protein is Protein RALF-like 20 (RALFL20) of Arabidopsis thaliana (Mouse-ear cress).